Here is a 62-residue protein sequence, read N- to C-terminus: Sperm histone (62 aa).

The disordered stretch occupies residues 1–62 (MARYRRSRTR…GSRRRRRRRY (62 aa)). The residue at position 9 (Thr-9) is a Phosphothreonine.

The protein belongs to the protamine P1 family. As to expression, testis.

Its subcellular location is the nucleus. It is found in the chromosome. Its function is as follows. Protamines substitute for histones in the chromatin of sperm during the haploid phase of spermatogenesis. They compact sperm DNA into a highly condensed, stable and inactive complex. The protein is Sperm histone of Gallus gallus (Chicken).